The following is a 149-amino-acid chain: Lymphocyte antigen 6 complex locus protein G5c (149 aa).

A signal peptide spans 1–41; the sequence is MLFMAGPAASWSLRPLGLHGVPQALCAVLLTVLVMKTLVLG. The 91-residue stretch at 59–149 folds into the UPAR/Ly6 domain; sequence LNCYRCLLET…NPDNRKNSMH (91 aa). 5 cysteine pairs are disulfide-bonded: cysteine 61-cysteine 88, cysteine 64-cysteine 73, cysteine 80-cysteine 106, cysteine 115-cysteine 132, and cysteine 133-cysteine 138. N-linked (GlcNAc...) asparagine glycosylation is present at asparagine 95.

As to quaternary structure, forms oligomers. In terms of processing, N-glycosylated. In terms of tissue distribution, detected in adult brain.

The protein resides in the secreted. May have a role in hematopoietic cell differentiation. In Mus musculus (Mouse), this protein is Lymphocyte antigen 6 complex locus protein G5c (Ly6g5c).